The primary structure comprises 184 residues: ATP synthase subunit b, chloroplastic (184 aa).

A helical membrane pass occupies residues 27–49 (LATNPINLSIVIGVLIFFGKGVL).

It belongs to the ATPase B chain family. F-type ATPases have 2 components, F(1) - the catalytic core - and F(0) - the membrane proton channel. F(1) has five subunits: alpha(3), beta(3), gamma(1), delta(1), epsilon(1). F(0) has four main subunits: a(1), b(1), b'(1) and c(10-14). The alpha and beta chains form an alternating ring which encloses part of the gamma chain. F(1) is attached to F(0) by a central stalk formed by the gamma and epsilon chains, while a peripheral stalk is formed by the delta, b and b' chains.

Its subcellular location is the plastid. The protein resides in the chloroplast thylakoid membrane. Functionally, f(1)F(0) ATP synthase produces ATP from ADP in the presence of a proton or sodium gradient. F-type ATPases consist of two structural domains, F(1) containing the extramembraneous catalytic core and F(0) containing the membrane proton channel, linked together by a central stalk and a peripheral stalk. During catalysis, ATP synthesis in the catalytic domain of F(1) is coupled via a rotary mechanism of the central stalk subunits to proton translocation. Its function is as follows. Component of the F(0) channel, it forms part of the peripheral stalk, linking F(1) to F(0). The protein is ATP synthase subunit b, chloroplastic of Lotus japonicus (Lotus corniculatus var. japonicus).